The following is a 468-amino-acid chain: Peroxisome proliferator-activated receptor alpha (468 aa).

Positions 1–20 are disordered; it reads MVDTESQICPLSPFGDDDLE. Residues 99–173 constitute a DNA-binding region (nuclear receptor); that stretch reads NIECRICGDK…DGMSHNAIRF (75 aa). 2 NR C4-type zinc fingers span residues 102–122 and 139–161; these read CRICGDKASGYHYGVHACEGC and CDRSCKIQKKNRNKCQYCRFQKC. Residues 239-466 enclose the NR LBD domain; sequence FVIHDMETLC…HPLLQEIYRD (228 aa). The interval 304–433 is required for heterodimerization with RXRA; it reads DQVTLLKYGV…PKLLQKMADL (130 aa).

This sequence belongs to the nuclear hormone receptor family. NR1 subfamily. Heterodimer; with RXRA. This heterodimerization is required for DNA binding and transactivation activity. Interacts with NCOA3 coactivator. Interacts with CITED2; the interaction stimulates its transcriptional activity. Also interacts with PPARBP in vitro. Interacts with AKAP13, LPIN1, PRDM16 and coactivator NCOA6. Interacts with ASXL1 and ASXL2. Interacts with PER2. Interacts with SIRT1; the interaction seems to be modulated by NAD(+) levels. Interacts with CRY1 and CRY2. In hepatocytes, interacts with PAQR3 and HUWE1; the interactions promote PPARA poylubiquitination and HUWE1-mediated degradation. In terms of processing, ubiquitinated by E3 ubiquitin-protein ligase HUWE1; leading to proteasomal degradation. Phosphorylated.

It is found in the nucleus. In terms of biological role, ligand-activated transcription factor. Key regulator of lipid metabolism. Activated by the endogenous ligand 1-palmitoyl-2-oleoyl-sn-glycerol-3-phosphocholine (16:0/18:1-GPC). Activated by oleylethanolamide, a naturally occurring lipid that regulates satiety. Receptor for peroxisome proliferators such as hypolipidemic drugs and fatty acids. Regulates the peroxisomal beta-oxidation pathway of fatty acids. Functions as a transcription activator for the ACOX1 and P450 genes. Transactivation activity requires heterodimerization with RXRA and is antagonized by NR2C2. May be required for the propagation of clock information to metabolic pathways regulated by PER2. This Phascolarctos cinereus (Koala) protein is Peroxisome proliferator-activated receptor alpha (PPARA).